A 322-amino-acid chain; its full sequence is UDP-N-acetylenolpyruvoylglucosamine reductase (322 aa).

The 167-residue stretch at 36-202 (RAGGPAQVLF…TSVLFEGVPG (167 aa)) folds into the FAD-binding PCMH-type domain. Arg182 is an active-site residue. Ser231 functions as the Proton donor in the catalytic mechanism. Residue Glu301 is part of the active site.

This sequence belongs to the MurB family. It depends on FAD as a cofactor.

Its subcellular location is the cytoplasm. The catalysed reaction is UDP-N-acetyl-alpha-D-muramate + NADP(+) = UDP-N-acetyl-3-O-(1-carboxyvinyl)-alpha-D-glucosamine + NADPH + H(+). It functions in the pathway cell wall biogenesis; peptidoglycan biosynthesis. Cell wall formation. The polypeptide is UDP-N-acetylenolpyruvoylglucosamine reductase (Brucella canis (strain ATCC 23365 / NCTC 10854 / RM-666)).